Here is a 98-residue protein sequence, read N- to C-terminus: Co-chaperonin GroES (98 aa).

The protein belongs to the GroES chaperonin family. In terms of assembly, heptamer of 7 subunits arranged in a ring. Interacts with the chaperonin GroEL.

It localises to the cytoplasm. Functionally, together with the chaperonin GroEL, plays an essential role in assisting protein folding. The GroEL-GroES system forms a nano-cage that allows encapsulation of the non-native substrate proteins and provides a physical environment optimized to promote and accelerate protein folding. GroES binds to the apical surface of the GroEL ring, thereby capping the opening of the GroEL channel. This chain is Co-chaperonin GroES, found in Micrococcus luteus (strain ATCC 4698 / DSM 20030 / JCM 1464 / CCM 169 / CCUG 5858 / IAM 1056 / NBRC 3333 / NCIMB 9278 / NCTC 2665 / VKM Ac-2230) (Micrococcus lysodeikticus).